A 212-amino-acid polypeptide reads, in one-letter code: Riboflavin kinase (212 aa).

Residues 1-87 (MKMKTLFLLI…YEEISTALYS (87 aa)) are H-T-H motif-like. Residues 88–212 (GFIVGEVISG…DGDKVRIEVV (125 aa)) are riboflavin kinase. A CDP-binding site is contributed by 97-102 (GIGEGA). Mg(2+) contacts are provided by threonine 124 and asparagine 126. 2 residues coordinate FMN: threonine 180 and glutamate 188. Residue 193-196 (VKLR) participates in CDP binding.

This sequence belongs to the archaeal riboflavin kinase family. Mg(2+) serves as cofactor.

The enzyme catalyses riboflavin + CTP = CDP + FMN + H(+). It participates in cofactor biosynthesis; FMN biosynthesis; FMN from riboflavin (CTP route): step 1/1. In terms of biological role, catalyzes the CTP-dependent phosphorylation of riboflavin (vitamin B2) to form flavin mononucleotide (FMN). The chain is Riboflavin kinase (ribK) from Pyrococcus abyssi (strain GE5 / Orsay).